The primary structure comprises 117 residues: uncharacterized protein (117 aa).

This is an uncharacterized protein from Fowlpox virus (strain NVSL) (FPV).